Reading from the N-terminus, the 627-residue chain is Signal recognition particle subunit SRP68 (627 aa).

Residues 1-53 form a disordered region; that stretch reads MAAEKQVPGGGGGGGSGGGGGSGGGGSGGGRGAGGEENKENERPSAGSKANKE. The span at 8-33 shows a compositional bias: gly residues; that stretch reads PGGGGGGGSGGGGGSGGGGSGGGRGA. Residues 34–43 are compositionally biased toward basic and acidic residues; the sequence is GGEENKENER. 2 positions are modified to phosphoserine: S48 and S241. Residues 52–252 form an RNA-binding region; sequence KEFGDSLSLE…NIRYCAYNIG (201 aa). K452 carries the post-translational modification N6-acetyllysine. Residues 588–610 are required for interaction with SRP72; it reads PLFFDLALNHVAFPPLEDKLEQK.

Belongs to the SRP68 family. As to quaternary structure, heterodimer with SRP72. SRP68/SRP72 heterodimer formation is stabilized by the presence of 7SL RNA. Component of a signal recognition particle (SRP) complex that consists of a 7SL RNA molecule of 300 nucleotides and six protein subunits: SRP72, SRP68, SRP54, SRP19, SRP14 and SRP9. Within the SRP complex, interacts (via C-terminus) with SRP72 (via N-terminus).

The protein resides in the cytoplasm. Its subcellular location is the nucleus. It is found in the nucleolus. The protein localises to the endoplasmic reticulum. Functionally, component of the signal recognition particle (SRP) complex, a ribonucleoprotein complex that mediates the cotranslational targeting of secretory and membrane proteins to the endoplasmic reticulum (ER). The SRP complex interacts with the signal sequence in nascent secretory and membrane proteins and directs them to the membrane of the ER. The SRP complex targets the ribosome-nascent chain complex to the SRP receptor (SR), which is anchored in the ER, where SR compaction and GTPase rearrangement drive cotranslational protein translocation into the ER. Binds the signal recognition particle RNA (7SL RNA), SRP72 binds to this complex subsequently. The SRP complex possibly participates in the elongation arrest function. This is Signal recognition particle subunit SRP68 (SRP68) from Homo sapiens (Human).